The following is a 656-amino-acid chain: DNA ligase (656 aa).

NAD(+) contacts are provided by residues 32-36 and 81-82; these read DAVYD and SL. The N6-AMP-lysine intermediate role is filled by lysine 112. NAD(+) contacts are provided by arginine 133, glutamate 167, and lysine 306. 4 residues coordinate Zn(2+): cysteine 400, cysteine 403, cysteine 416, and cysteine 421. The region spanning 577–656 is the BRCT domain; the sequence is KSSSVFNNKT…ELLKRLKELD (80 aa).

This sequence belongs to the NAD-dependent DNA ligase family. LigA subfamily. Requires Mg(2+) as cofactor. The cofactor is Mn(2+).

The enzyme catalyses NAD(+) + (deoxyribonucleotide)n-3'-hydroxyl + 5'-phospho-(deoxyribonucleotide)m = (deoxyribonucleotide)n+m + AMP + beta-nicotinamide D-nucleotide.. DNA ligase that catalyzes the formation of phosphodiester linkages between 5'-phosphoryl and 3'-hydroxyl groups in double-stranded DNA using NAD as a coenzyme and as the energy source for the reaction. It is essential for DNA replication and repair of damaged DNA. The chain is DNA ligase from Helicobacter pylori (strain HPAG1).